Consider the following 361-residue polypeptide: Uroporphyrinogen decarboxylase (361 aa).

Substrate contacts are provided by residues 27-31, aspartate 77, tyrosine 154, threonine 209, and histidine 327; that span reads RQAGR.

This sequence belongs to the uroporphyrinogen decarboxylase family. Homodimer.

The protein localises to the cytoplasm. It catalyses the reaction uroporphyrinogen III + 4 H(+) = coproporphyrinogen III + 4 CO2. It participates in porphyrin-containing compound metabolism; protoporphyrin-IX biosynthesis; coproporphyrinogen-III from 5-aminolevulinate: step 4/4. Its function is as follows. Catalyzes the decarboxylation of four acetate groups of uroporphyrinogen-III to yield coproporphyrinogen-III. The polypeptide is Uroporphyrinogen decarboxylase (Coxiella burnetii (strain Dugway 5J108-111)).